The primary structure comprises 351 residues: Thiamine-phosphate synthase (351 aa).

The segment at 1-129 (MVEPYSQKEQ…AKACKQMRYQ (129 aa)) is unknown. Residues 65–85 (LRAARDTPGDPGTELTHPQEE) form a disordered region. Positions 130–351 (VYTLESNLMG…SQLNRIKPEL (222 aa)) are thiamine-phosphate synthase. 4-amino-2-methyl-5-(diphosphooxymethyl)pyrimidine is bound by residues 177–181 (QYRDK) and Asn-209. Positions 210 and 229 each coordinate Mg(2+). Residue Ser-248 coordinates 4-amino-2-methyl-5-(diphosphooxymethyl)pyrimidine. Position 274-276 (274-276 (TPT)) interacts with 2-[(2R,5Z)-2-carboxy-4-methylthiazol-5(2H)-ylidene]ethyl phosphate. Lys-277 contacts 4-amino-2-methyl-5-(diphosphooxymethyl)pyrimidine. Gly-304 contributes to the 2-[(2R,5Z)-2-carboxy-4-methylthiazol-5(2H)-ylidene]ethyl phosphate binding site.

Belongs to the thiamine-phosphate synthase family. Mg(2+) is required as a cofactor.

The enzyme catalyses 2-[(2R,5Z)-2-carboxy-4-methylthiazol-5(2H)-ylidene]ethyl phosphate + 4-amino-2-methyl-5-(diphosphooxymethyl)pyrimidine + 2 H(+) = thiamine phosphate + CO2 + diphosphate. It catalyses the reaction 2-(2-carboxy-4-methylthiazol-5-yl)ethyl phosphate + 4-amino-2-methyl-5-(diphosphooxymethyl)pyrimidine + 2 H(+) = thiamine phosphate + CO2 + diphosphate. The catalysed reaction is 4-methyl-5-(2-phosphooxyethyl)-thiazole + 4-amino-2-methyl-5-(diphosphooxymethyl)pyrimidine + H(+) = thiamine phosphate + diphosphate. It participates in cofactor biosynthesis; thiamine diphosphate biosynthesis; thiamine phosphate from 4-amino-2-methyl-5-diphosphomethylpyrimidine and 4-methyl-5-(2-phosphoethyl)-thiazole: step 1/1. Its function is as follows. Condenses 4-methyl-5-(beta-hydroxyethyl)thiazole monophosphate (THZ-P) and 2-methyl-4-amino-5-hydroxymethyl pyrimidine pyrophosphate (HMP-PP) to form thiamine monophosphate (TMP). In Nostoc punctiforme (strain ATCC 29133 / PCC 73102), this protein is Thiamine-phosphate synthase.